The primary structure comprises 626 residues: MTKQEKAINLSESAQVDQQSVQPFPRSRKVYVEGSRPDIRVPMREISLDDTPTDFGGETNAPVLVYDTSGPYTDPNVIIDVRKGLADVRSAWIDARGDTERLDGLSSDFGQQRLNDAELAKLRFAHVRNPRRAKAGANVSQMHYARRGIITAEMEYVAIRENMKLQEARAAGLLKEQHAGHSFGANIPKEITPEFVRQEIARGRAIIPANINHPEVEPMIIGRNFLVKINGNIGNSALGSSIEEEVAKLTWGIRWGSDTVMDLSTGKHIHETREWIIRNSPVPIGTVPIYQALEKVNGVAEDLIWELFRDTLIEQAEQGVDYFTIHAGVLLRYVPLTAKRVTGIVSRGGSIMAKWCLAHHKENFLYTHFDEICEIMKAYDVSFSLGDGLRPGSIADANDAAQFGELETLGELTKIAWKHDVQCMIEGPGHVPMQLIKENMDKQLECCDEAPFYTLGPLTTDIAPGYDHITSGIGAAMIGWFGCAMLCYVTPKEHLGLPNKDDVKTGIITYKIAAHAADLAKGHPGAQIRDNALSKARFEFRWEDQFNLGLDPDTARAFHDETLPKESAKVAHFCSMCGPKFCSMKITQEVREYAAKIEAVDVTVEEGMREQAERFRQEGSQLYHKV.

Residues 1-22 (MTKQEKAINLSESAQVDQQSVQ) form a disordered region. Over residues 10-22 (LSESAQVDQQSVQ) the composition is skewed to polar residues. Residues Asn-232, Met-261, Tyr-290, His-326, 346–348 (SRG), 387–390 (DGLR), and Glu-426 each bind substrate. Position 430 (His-430) interacts with Zn(2+). Tyr-453 contributes to the substrate binding site. Position 494 (His-494) interacts with Zn(2+). 3 residues coordinate [4Fe-4S] cluster: Cys-574, Cys-577, and Cys-582.

Belongs to the ThiC family. Homodimer. The cofactor is [4Fe-4S] cluster.

It catalyses the reaction 5-amino-1-(5-phospho-beta-D-ribosyl)imidazole + S-adenosyl-L-methionine = 4-amino-2-methyl-5-(phosphooxymethyl)pyrimidine + CO + 5'-deoxyadenosine + formate + L-methionine + 3 H(+). It participates in cofactor biosynthesis; thiamine diphosphate biosynthesis. Its function is as follows. Catalyzes the synthesis of the hydroxymethylpyrimidine phosphate (HMP-P) moiety of thiamine from aminoimidazole ribotide (AIR) in a radical S-adenosyl-L-methionine (SAM)-dependent reaction. This chain is Phosphomethylpyrimidine synthase, found in Pseudomonas putida (strain GB-1).